The following is a 373-amino-acid chain: L-threonine 3-dehydrogenase, mitochondrial (373 aa).

NAD(+) is bound by residues 62–67 (GGLGQL), 88–90 (DIR), 106–107 (DI), Tyr195, Lys199, and Ile225. The Proton donor/acceptor role is filled by Tyr195.

The protein belongs to the NAD(P)-dependent epimerase/dehydratase family. Homodimer.

It is found in the mitochondrion. It catalyses the reaction L-threonine + NAD(+) = (2S)-2-amino-3-oxobutanoate + NADH + H(+). Its pathway is amino-acid degradation; L-threonine degradation via oxydo-reductase pathway; glycine from L-threonine: step 1/2. Catalyzes the NAD(+)-dependent oxidation of L-threonine to 2-amino-3-ketobutyrate, mediating L-threonine catabolism. This chain is L-threonine 3-dehydrogenase, mitochondrial, found in Bos taurus (Bovine).